We begin with the raw amino-acid sequence, 287 residues long: Maleylpyruvate hydrolase (287 aa).

Residues E143, E145, and D174 each coordinate a divalent metal cation.

It belongs to the FAH family. In terms of assembly, homodimer.

The enzyme catalyses 3-maleylpyruvate + H2O = maleate + pyruvate + H(+). With respect to regulation, activated by Mn(2+). Inhibited by Ni(2+), Cd(2+), Co(2+) or Cu(2+). Involved in the degradation of gentisate. Catalyzes the hydrolysis of 3-maleylpyruvate, the ring-cleavage product of gentisate. This chain is Maleylpyruvate hydrolase, found in Aquipseudomonas alcaligenes (Pseudomonas alcaligenes).